A 148-amino-acid polypeptide reads, in one-letter code: Large ribosomal subunit protein uL22 (148 aa).

This sequence belongs to the universal ribosomal protein uL22 family. As to quaternary structure, part of the 50S ribosomal subunit.

Functionally, this protein binds specifically to 23S rRNA; its binding is stimulated by other ribosomal proteins, e.g. L4, L17, and L20. It is important during the early stages of 50S assembly. It makes multiple contacts with different domains of the 23S rRNA in the assembled 50S subunit and ribosome. In terms of biological role, the globular domain of the protein is located near the polypeptide exit tunnel on the outside of the subunit, while an extended beta-hairpin is found that lines the wall of the exit tunnel in the center of the 70S ribosome. This is Large ribosomal subunit protein uL22 from Thermosipho africanus (strain TCF52B).